A 208-amino-acid polypeptide reads, in one-letter code: NAD(P)H-hydrate epimerase (208 aa).

The 198-residue stretch at 11-208 (MRAKDQFTIN…VIVADDMGTY (198 aa)) folds into the YjeF N-terminal domain. 59–63 (NNGGD) contributes to the (6S)-NADPHX binding site. K(+) is bound by residues asparagine 60 and aspartate 122. Residues 126–132 (GIGIDRP), tyrosine 137, and aspartate 155 contribute to the (6S)-NADPHX site. Serine 158 provides a ligand contact to K(+).

Belongs to the NnrE/AIBP family. The cofactor is K(+).

The catalysed reaction is (6R)-NADHX = (6S)-NADHX. It catalyses the reaction (6R)-NADPHX = (6S)-NADPHX. In terms of biological role, catalyzes the epimerization of the S- and R-forms of NAD(P)HX, a damaged form of NAD(P)H that is a result of enzymatic or heat-dependent hydration. This is a prerequisite for the S-specific NAD(P)H-hydrate dehydratase to allow the repair of both epimers of NAD(P)HX. This chain is NAD(P)H-hydrate epimerase, found in Limosilactobacillus fermentum (strain NBRC 3956 / LMG 18251) (Lactobacillus fermentum).